The sequence spans 247 residues: uncharacterized protein (247 aa).

Low complexity-rich tracts occupy residues 1–12 (MFSPQQPMRNYP) and 21–43 (PNQRMMGRRPPNMRGPSFGAQQQ). 2 disordered regions span residues 1–43 (MFSP…AQQQ) and 157–247 (LSKS…RLYI). Basic and acidic residues-rich tracts occupy residues 170-196 (ESEKQSVSEESSEKEKETETKTSDGNK) and 210-229 (KTTDNKEQELKTSAPKKKEA).

This is an uncharacterized protein from Bacillus subtilis (strain 168).